We begin with the raw amino-acid sequence, 507 residues long: Photosystem II CP47 reaction center protein (507 aa).

The Cytoplasmic segment spans residues 2 to 16 (GLPWYRVHTVVLNDP). The chain crosses the membrane as a helical span at residues 17–39 (GRLISVHLMHTALVAGWAGSMAL). The Lumenal, thylakoid segment spans residues 40 to 94 (YELAIFDSSDAVLNPMWRQGMFVLPFMARLGVTSSWNGWSVTGETGLDPGFWSFE). Residues 95 to 116 (GVAAAHIVLSGLLFLAAVWHWV) form a helical membrane-spanning segment. Topologically, residues 117 to 134 (FWDLELFVDPRTGESALD) are cytoplasmic. The helical transmembrane segment at 135 to 159 (LPKMFGIHLFLSGLLCFGFGAFHLT) threads the bilayer. Topologically, residues 160 to 196 (GVWGPGMWVSDPYGLTGHVQPVAPEWGPAGFNPFNPG) are lumenal, thylakoid. Residues 197–218 (GVVAHHIAAGIVGIIAGLFHLT) traverse the membrane as a helical segment. Residues 219–233 (VRPPERLYKALRMGN) are Cytoplasmic-facing. The chain crosses the membrane as a helical span at residues 234-255 (IETVLSSSIAAVFFAAFVVAGT). At 256–450 (MWYGNATTPI…GVFRTSPRGW (195 aa)) the chain is on the lumenal, thylakoid side. The helical transmembrane segment at 451 to 474 (FTFGHAVFALLFFFGHIWHGSRTL) threads the bilayer. At 475 to 507 (FRDVFAGVDPGLEEQVEFGVFAKVGDLSTRKEA) the chain is on the cytoplasmic side.

This sequence belongs to the PsbB/PsbC family. PsbB subfamily. PSII is composed of 1 copy each of membrane proteins PsbA, PsbB, PsbC, PsbD, PsbE, PsbF, PsbH, PsbI, PsbJ, PsbK, PsbL, PsbM, PsbT, PsbX, Psb30/Ycf12, peripheral proteins PsbO, CyanoQ (PsbQ), PsbU, PsbV and a large number of cofactors. It forms dimeric complexes. Contacts PsbQ. Requires Binds multiple chlorophylls. PSII binds additional chlorophylls, carotenoids and specific lipids. as cofactor.

The protein localises to the cellular thylakoid membrane. In terms of biological role, one of the components of the core complex of photosystem II (PSII). It binds chlorophyll and helps catalyze the primary light-induced photochemical processes of PSII. PSII is a light-driven water:plastoquinone oxidoreductase, using light energy to abstract electrons from H(2)O, generating O(2) and a proton gradient subsequently used for ATP formation. The protein is Photosystem II CP47 reaction center protein of Synechocystis sp. (strain ATCC 27184 / PCC 6803 / Kazusa).